An 81-amino-acid chain; its full sequence is Photosystem I iron-sulfur center (81 aa).

4Fe-4S ferredoxin-type domains lie at 2–31 (AHSV…MIPW) and 39–68 (IASA…VRVY). [4Fe-4S] cluster contacts are provided by cysteine 11, cysteine 14, cysteine 17, cysteine 21, cysteine 48, cysteine 51, cysteine 54, and cysteine 58.

As to quaternary structure, the eukaryotic PSI reaction center is composed of at least 11 subunits. [4Fe-4S] cluster serves as cofactor.

It localises to the plastid. It is found in the chloroplast thylakoid membrane. The enzyme catalyses reduced [plastocyanin] + hnu + oxidized [2Fe-2S]-[ferredoxin] = oxidized [plastocyanin] + reduced [2Fe-2S]-[ferredoxin]. In terms of biological role, apoprotein for the two 4Fe-4S centers FA and FB of photosystem I (PSI); essential for photochemical activity. FB is the terminal electron acceptor of PSI, donating electrons to ferredoxin. The C-terminus interacts with PsaA/B/D and helps assemble the protein into the PSI complex. Required for binding of PsaD and PsaE to PSI. PSI is a plastocyanin-ferredoxin oxidoreductase, converting photonic excitation into a charge separation, which transfers an electron from the donor P700 chlorophyll pair to the spectroscopically characterized acceptors A0, A1, FX, FA and FB in turn. The chain is Photosystem I iron-sulfur center from Zygnema circumcarinatum (Green alga).